Here is a 1415-residue protein sequence, read N- to C-terminus: DNA-directed RNA polymerase subunit beta' (1415 aa).

Zn(2+) is bound by residues Cys-214, Cys-294, Cys-301, and Cys-304. Positions 1335–1351 (QNFVDSQGKPQSQSSFI) are enriched in polar residues. Residues 1335 to 1390 (QNFVDSQGKPQSQSSFIDDSMSEFSPVKDKSGSVLDDSDFPPGNFDSDFPADNYDL) form a disordered region.

The protein belongs to the RNA polymerase beta' chain family. RpoC2 subfamily. In terms of assembly, in cyanobacteria the RNAP catalytic core is composed of 2 alpha, 1 beta, 1 beta', 1 gamma and 1 omega subunit. When a sigma factor is associated with the core the holoenzyme is formed, which can initiate transcription. The cofactor is Zn(2+).

It catalyses the reaction RNA(n) + a ribonucleoside 5'-triphosphate = RNA(n+1) + diphosphate. In terms of biological role, DNA-dependent RNA polymerase catalyzes the transcription of DNA into RNA using the four ribonucleoside triphosphates as substrates. This is DNA-directed RNA polymerase subunit beta' from Trichodesmium erythraeum (strain IMS101).